The sequence spans 860 residues: Alanine--tRNA ligase (860 aa).

Zn(2+) is bound by residues His553, His557, Cys655, and His659.

It belongs to the class-II aminoacyl-tRNA synthetase family. Zn(2+) is required as a cofactor.

The protein resides in the cytoplasm. The catalysed reaction is tRNA(Ala) + L-alanine + ATP = L-alanyl-tRNA(Ala) + AMP + diphosphate. Catalyzes the attachment of alanine to tRNA(Ala) in a two-step reaction: alanine is first activated by ATP to form Ala-AMP and then transferred to the acceptor end of tRNA(Ala). Also edits incorrectly charged Ser-tRNA(Ala) and Gly-tRNA(Ala) via its editing domain. The sequence is that of Alanine--tRNA ligase from Legionella pneumophila (strain Lens).